Reading from the N-terminus, the 437-residue chain is RING finger protein 150 (437 aa).

The first 34 residues, 1 to 34, serve as a signal peptide directing secretion; sequence MTMSLIQACRSLALSTWLLSFCFVHLLCLDFTVA. Residues 35–207 are Extracellular-facing; that stretch reads EKEEWYTAFV…NLQKYVSRTS (173 aa). N-linked (GlcNAc...) asparagine glycosylation is found at N45, N124, N152, and N185. A PA domain is found at 80-182; sequence SPKQDARGEV…PKGKEIVSLL (103 aa). Residues 208–228 form a helical membrane-spanning segment; that stretch reads VVFVSISFIVLMIISLAWLVF. The Cytoplasmic segment spans residues 229–437; sequence YYIQRFRYAN…TDQDCEEVKS (209 aa). The RING-type; atypical zinc-finger motif lies at 277–318; sequence CAVCIEGYKPNDVVRILPCRHLFHKSCVDPWLLDHRTCPMCK.

The protein localises to the membrane. This Mus musculus (Mouse) protein is RING finger protein 150 (Rnf150).